The chain runs to 368 residues: Glycolate oxidase 3 (368 aa).

Methionine 1 is subject to N-acetylmethionine. In terms of domain architecture, FMN hydroxy acid dehydrogenase spans 1–359 (MEITNVMEYE…SRTHIKTDWD (359 aa)). Tyrosine 24 contributes to the glyoxylate binding site. Residues 77 to 79 (PTA), serine 106, 127 to 129 (QLY), and threonine 155 contribute to the FMN site. Glyoxylate is bound at residue tyrosine 129. Arginine 164 serves as a coordination point for glyoxylate. 2 residues coordinate FMN: lysine 230 and serine 252. Residues histidine 254 and arginine 257 each contribute to the glyoxylate site. Histidine 254 (proton acceptor) is an active-site residue. Residues 285–289 (DGGVR) and 308–309 (GR) contribute to the FMN site.

Belongs to the FMN-dependent alpha-hydroxy acid dehydrogenase family. Homotetramer. Requires FMN as cofactor.

It is found in the peroxisome. It carries out the reaction glycolate + O2 = glyoxylate + H2O2. It functions in the pathway photosynthesis; photorespiration; glycine from 2-phosphoglycolate: step 2/3. In terms of biological role, catalyzes the oxidation of glycolate to glyoxylate, with a reduction of O2 to H2O2. Is a key enzyme in photorespiration in green plants. The polypeptide is Glycolate oxidase 3 (GLO5) (Arabidopsis thaliana (Mouse-ear cress)).